A 204-amino-acid polypeptide reads, in one-letter code: Leucyl/phenylalanyl-tRNA--protein transferase (204 aa).

The protein belongs to the L/F-transferase family.

It is found in the cytoplasm. It carries out the reaction N-terminal L-lysyl-[protein] + L-leucyl-tRNA(Leu) = N-terminal L-leucyl-L-lysyl-[protein] + tRNA(Leu) + H(+). The catalysed reaction is N-terminal L-arginyl-[protein] + L-leucyl-tRNA(Leu) = N-terminal L-leucyl-L-arginyl-[protein] + tRNA(Leu) + H(+). The enzyme catalyses L-phenylalanyl-tRNA(Phe) + an N-terminal L-alpha-aminoacyl-[protein] = an N-terminal L-phenylalanyl-L-alpha-aminoacyl-[protein] + tRNA(Phe). Its function is as follows. Functions in the N-end rule pathway of protein degradation where it conjugates Leu, Phe and, less efficiently, Met from aminoacyl-tRNAs to the N-termini of proteins containing an N-terminal arginine or lysine. This Brucella abortus (strain 2308) protein is Leucyl/phenylalanyl-tRNA--protein transferase.